The sequence spans 404 residues: Argininosuccinate synthase (404 aa).

9 to 17 (AYSGGLDTS) serves as a coordination point for ATP. Tyrosine 86 is a binding site for L-citrulline. Glycine 116 provides a ligand contact to ATP. L-aspartate is bound by residues threonine 118, asparagine 122, and aspartate 123. L-citrulline is bound at residue asparagine 122. 5 residues coordinate L-citrulline: arginine 126, serine 174, serine 183, glutamate 259, and tyrosine 271.

This sequence belongs to the argininosuccinate synthase family. Type 1 subfamily. In terms of assembly, homotetramer.

It localises to the cytoplasm. The catalysed reaction is L-citrulline + L-aspartate + ATP = 2-(N(omega)-L-arginino)succinate + AMP + diphosphate + H(+). It functions in the pathway amino-acid biosynthesis; L-arginine biosynthesis; L-arginine from L-ornithine and carbamoyl phosphate: step 2/3. The sequence is that of Argininosuccinate synthase from Listeria welshimeri serovar 6b (strain ATCC 35897 / DSM 20650 / CCUG 15529 / CIP 8149 / NCTC 11857 / SLCC 5334 / V8).